The sequence spans 636 residues: Leucine-rich repeat and fibronectin type-III domain-containing protein 4 (636 aa).

A signal peptide spans 1–16 (MAPPLLLLLLASGAAA). In terms of domain architecture, LRRNT spans 17–48 (CPLPCVCQNLSESLSTLCAHRGLLFVPPNVDR). The Extracellular portion of the chain corresponds to 17 to 518 (CPLPCVCQNL…LQAHVLGGTL (502 aa)). An N-linked (GlcNAc...) asparagine glycan is attached at Asn25. LRR repeat units lie at residues 49–70 (RTVELRLADNFIQALGPPDFRN), 73–94 (GLVDLTLSRNAITRIGARSFGD), 97–118 (SLRSLHLDGNRLVELGSSSLRG), 121–142 (NLQHLILSGNQLGRIAPGAFDD), 146–169 (SLEDLDVSYNNLRQVPWAGIGSMP), 170–191 (ALHTLNLDHNLIDALPPGVFAQ), and 194–215 (QLSRLDLTSNRLATLAPDPLFS). Positions 234 to 280 (NPLHCNCELLWLRRLARPDDLETCASPPTLAGRYFWAVPEGEFSCEP) constitute an LRRCT domain. Positions 281–367 (PLIARHTQRL…GEATARVELR (87 aa)) constitute an Ig-like domain. Cysteines 302 and 351 form a disulfide. Asn333 carries N-linked (GlcNAc...) asparagine glycosylation. A Fibronectin type-III domain is found at 405–502 (SEPAVQVTEV…GCAHFSTLPA (98 aa)). The chain crosses the membrane as a helical span at residues 519–539 (TVAVGGVLVAALLVFTVALLV). The Cytoplasmic portion of the chain corresponds to 540–636 (RGRGAGNGRL…SAERLEESVV (97 aa)). A disordered region spans residues 556–585 (VQSQTNGGTSPMPKSHPPRSPPPRPQRSCS). Pro residues predominate over residues 569–580 (KSHPPRSPPPRP). 2 positions are modified to phosphoserine: Ser585 and Ser627. Positions 633-636 (ESVV) match the PDZ-binding motif.

It belongs to the LRFN family. In terms of assembly, forms heteromeric complexes with LRFN1 and LRFN2. Can form heteromeric complexes with LRFN3 and LRFN5. Unable to form homophilic interactions across cell junctions. Interacts with DLG1, DLG2, DLG3 and DLG4. Post-translationally, glycosylated.

The protein resides in the membrane. In terms of biological role, promotes neurite outgrowth in hippocampal neurons. May play a role in redistributing DLG4 to the cell periphery. This is Leucine-rich repeat and fibronectin type-III domain-containing protein 4 (Lrfn4) from Rattus norvegicus (Rat).